Consider the following 316-residue polypeptide: Glutathione synthetase (316 aa).

An ATP-grasp domain is found at Lys125–Glu310. Residue Arg256 is glycosylated (N-beta-linked (GlcNAc) arginine). 2 residues coordinate Mg(2+): Glu281 and Asn283.

It belongs to the prokaryotic GSH synthase family. Mg(2+) is required as a cofactor. It depends on Mn(2+) as a cofactor.

The catalysed reaction is gamma-L-glutamyl-L-cysteine + glycine + ATP = glutathione + ADP + phosphate + H(+). Its pathway is sulfur metabolism; glutathione biosynthesis; glutathione from L-cysteine and L-glutamate: step 2/2. In Escherichia coli O127:H6 (strain E2348/69 / EPEC), this protein is Glutathione synthetase.